A 73-amino-acid polypeptide reads, in one-letter code: Conotoxin Bt11.1 (73 aa).

The N-terminal stretch at 1-20 (MKLCVAFLLVLVILPSVIGG) is a signal peptide. The propeptide occupies 21–35 (KPSERTLSGATRRGD). 4 disulfides stabilise this stretch: cysteine 39–cysteine 53, cysteine 46–cysteine 58, cysteine 52–cysteine 63, and cysteine 57–cysteine 70.

It belongs to the conotoxin I1 superfamily. Expressed by the venom duct.

The protein localises to the secreted. In Conus betulinus (Beech cone), this protein is Conotoxin Bt11.1.